Here is a 363-residue protein sequence, read N- to C-terminus: tRNA/tmRNA (uracil-C(5))-methyltransferase (363 aa).

S-adenosyl-L-methionine-binding residues include glutamine 187, tyrosine 215, asparagine 220, glutamate 236, and aspartate 296. Catalysis depends on cysteine 321, which acts as the Nucleophile. Residue glutamate 355 is the Proton acceptor of the active site.

This sequence belongs to the class I-like SAM-binding methyltransferase superfamily. RNA M5U methyltransferase family. TrmA subfamily.

It carries out the reaction uridine(54) in tRNA + S-adenosyl-L-methionine = 5-methyluridine(54) in tRNA + S-adenosyl-L-homocysteine + H(+). The catalysed reaction is uridine(341) in tmRNA + S-adenosyl-L-methionine = 5-methyluridine(341) in tmRNA + S-adenosyl-L-homocysteine + H(+). Dual-specificity methyltransferase that catalyzes the formation of 5-methyluridine at position 54 (m5U54) in all tRNAs, and that of position 341 (m5U341) in tmRNA (transfer-mRNA). This chain is tRNA/tmRNA (uracil-C(5))-methyltransferase, found in Haemophilus influenzae (strain PittEE).